Reading from the N-terminus, the 72-residue chain is Translation initiation factor IF-1 (72 aa).

An S1-like domain is found at 1–72 (MAKEELLEMR…TKGRITYRFK (72 aa)).

Belongs to the IF-1 family. In terms of assembly, component of the 30S ribosomal translation pre-initiation complex which assembles on the 30S ribosome in the order IF-2 and IF-3, IF-1 and N-formylmethionyl-tRNA(fMet); mRNA recruitment can occur at any time during PIC assembly.

It is found in the cytoplasm. Functionally, one of the essential components for the initiation of protein synthesis. Stabilizes the binding of IF-2 and IF-3 on the 30S subunit to which N-formylmethionyl-tRNA(fMet) subsequently binds. Helps modulate mRNA selection, yielding the 30S pre-initiation complex (PIC). Upon addition of the 50S ribosomal subunit IF-1, IF-2 and IF-3 are released leaving the mature 70S translation initiation complex. This chain is Translation initiation factor IF-1, found in Sphingopyxis alaskensis (strain DSM 13593 / LMG 18877 / RB2256) (Sphingomonas alaskensis).